The primary structure comprises 430 residues: MATIILGSQWGDEGKGKLTDILCPKAQICARAAGGHNAGHSIVANGVEYDFHLLPSGLVNPNCMNLIGSSVVFHVPSFFSELSKLEEKGLTDVHNRILVSDRCHVDFDLHAAVDGLEEVELGDRKIGTTGRGIGPSYSTKMARSGVRIHEIFNEEIFERKLRQLANGYKKRFGDLLKYDVEEEIARFKEYRVKLAPYTVDAVQYMKQAQDRGYKILIEGANALMLDIDYGTYPYVTSSNTGLGGIITGLSINPTKIDNIIGVVKAYTTRVGGGPFKTEDLEEAGTKLQDIGREWGVSTGRKRRCGWLDLVVLKYSTAINNYTALNLTKLDILDTFETIKVAVAYKDPQTGEEVEYFPADLGILDSLEVVYKELPGWNKPITDCKTYYDLPKEARAYVEFIEEFVGVPICYIGTGPKREDMIVRKASAIKE.

GTP-binding positions include 11–17 (GDEGKGK) and 39–41 (GHS). Catalysis depends on D12, which acts as the Proton acceptor. D12 and G39 together coordinate Mg(2+). IMP-binding positions include 12 to 15 (DEGK), 37 to 40 (NAGH), T129, R143, N221, T236, and R300. H40 serves as the catalytic Proton donor. 296-302 (VSTGRKR) contributes to the substrate binding site. Residues R302, 328-330 (KLD), and 412-414 (GTG) each bind GTP.

This sequence belongs to the adenylosuccinate synthetase family. Homodimer. It depends on Mg(2+) as a cofactor.

It is found in the cytoplasm. The enzyme catalyses IMP + L-aspartate + GTP = N(6)-(1,2-dicarboxyethyl)-AMP + GDP + phosphate + 2 H(+). Its pathway is purine metabolism; AMP biosynthesis via de novo pathway; AMP from IMP: step 1/2. Functionally, plays an important role in the de novo pathway and in the salvage pathway of purine nucleotide biosynthesis. Catalyzes the first committed step in the biosynthesis of AMP from IMP. The polypeptide is Adenylosuccinate synthetase (Sordaria macrospora (strain ATCC MYA-333 / DSM 997 / K(L3346) / K-hell)).